We begin with the raw amino-acid sequence, 220 residues long: ATP-dependent dethiobiotin synthetase BioD (220 aa).

Residue 12-17 participates in ATP binding; that stretch reads DVGKTI. Thr-16 is a Mg(2+) binding site. The active site involves Lys-37. Thr-41 contributes to the substrate binding site. Residues Asp-49, 107–110, 167–168, and 197–199 each bind ATP; these read EGAG, GS, and PAG. The Mg(2+) site is built by Asp-49 and Glu-107.

This sequence belongs to the dethiobiotin synthetase family. In terms of assembly, homodimer. It depends on Mg(2+) as a cofactor.

It localises to the cytoplasm. The enzyme catalyses (7R,8S)-7,8-diammoniononanoate + CO2 + ATP = (4R,5S)-dethiobiotin + ADP + phosphate + 3 H(+). The protein operates within cofactor biosynthesis; biotin biosynthesis; biotin from 7,8-diaminononanoate: step 1/2. Catalyzes a mechanistically unusual reaction, the ATP-dependent insertion of CO2 between the N7 and N8 nitrogen atoms of 7,8-diaminopelargonic acid (DAPA, also called 7,8-diammoniononanoate) to form a ureido ring. The chain is ATP-dependent dethiobiotin synthetase BioD from Corynebacterium efficiens (strain DSM 44549 / YS-314 / AJ 12310 / JCM 11189 / NBRC 100395).